We begin with the raw amino-acid sequence, 448 residues long: Ribosomal protein uS12 methylthiotransferase RimO (448 aa).

Positions 7-123 (EKVSLVSLGC…IAEIIAEKKQ (117 aa)) constitute an MTTase N-terminal domain. Residues cysteine 16, cysteine 52, cysteine 86, cysteine 161, cysteine 165, and cysteine 168 each coordinate [4Fe-4S] cluster. In terms of domain architecture, Radical SAM core spans 147–377 (SSPHYTAYLK…MRTQARVSFK (231 aa)). One can recognise a TRAM domain in the interval 380 to 448 (RTLVDSEEDV…DYDLIGEIVD (69 aa)).

Belongs to the methylthiotransferase family. RimO subfamily. [4Fe-4S] cluster serves as cofactor.

The protein localises to the cytoplasm. The enzyme catalyses L-aspartate(89)-[ribosomal protein uS12]-hydrogen + (sulfur carrier)-SH + AH2 + 2 S-adenosyl-L-methionine = 3-methylsulfanyl-L-aspartate(89)-[ribosomal protein uS12]-hydrogen + (sulfur carrier)-H + 5'-deoxyadenosine + L-methionine + A + S-adenosyl-L-homocysteine + 2 H(+). In terms of biological role, catalyzes the methylthiolation of an aspartic acid residue of ribosomal protein uS12. This Citrifermentans bemidjiense (strain ATCC BAA-1014 / DSM 16622 / JCM 12645 / Bem) (Geobacter bemidjiensis) protein is Ribosomal protein uS12 methylthiotransferase RimO.